A 165-amino-acid polypeptide reads, in one-letter code: MSDPLTHFNDQNRAKMVDVTAKQVTARTATATGTIRMQPATLDRIHAGTMKKGDVLAVAQVAGIMAAKQTSNLIPMCHLIPLTGVDIHFTDNNQDTITATATVKTKHVTGVEIEALLAVQTTLLTIYDMCKAIDRGMVIDNVHLVEKDGGKSGHFQFGEAPESQA.

Residues methionine 76–histidine 78 and isoleucine 113–glutamate 114 contribute to the substrate site. Aspartate 128 is an active-site residue.

The protein belongs to the MoaC family. Homohexamer; trimer of dimers.

The catalysed reaction is (8S)-3',8-cyclo-7,8-dihydroguanosine 5'-triphosphate = cyclic pyranopterin phosphate + diphosphate. Its pathway is cofactor biosynthesis; molybdopterin biosynthesis. Catalyzes the conversion of (8S)-3',8-cyclo-7,8-dihydroguanosine 5'-triphosphate to cyclic pyranopterin monophosphate (cPMP). The chain is Cyclic pyranopterin monophosphate synthase from Limosilactobacillus fermentum (strain NBRC 3956 / LMG 18251) (Lactobacillus fermentum).